We begin with the raw amino-acid sequence, 171 residues long: Small ribosomal subunit protein uS5 (171 aa).

The region spanning 14 to 77 (LKEKLVMVNR…EKAKKKLLKI (64 aa)) is the S5 DRBM domain.

It belongs to the universal ribosomal protein uS5 family. As to quaternary structure, part of the 30S ribosomal subunit. Contacts proteins S4 and S8.

With S4 and S12 plays an important role in translational accuracy. In terms of biological role, located at the back of the 30S subunit body where it stabilizes the conformation of the head with respect to the body. This chain is Small ribosomal subunit protein uS5, found in Karelsulcia muelleri (strain GWSS) (Sulcia muelleri).